A 100-amino-acid polypeptide reads, in one-letter code: Large ribosomal subunit protein uL23 (100 aa).

Belongs to the universal ribosomal protein uL23 family. In terms of assembly, part of the 50S ribosomal subunit. Contacts protein L29, and trigger factor when it is bound to the ribosome.

Functionally, one of the early assembly proteins it binds 23S rRNA. One of the proteins that surrounds the polypeptide exit tunnel on the outside of the ribosome. Forms the main docking site for trigger factor binding to the ribosome. The protein is Large ribosomal subunit protein uL23 of Aliivibrio fischeri (strain MJ11) (Vibrio fischeri).